A 115-amino-acid polypeptide reads, in one-letter code: NADH-ubiquinone oxidoreductase chain 3 (115 aa).

The next 3 membrane-spanning stretches (helical) occupy residues 3–23 (LLII…IAFW), 55–75 (FFLV…LLPL), and 86–106 (TMMA…SYEW).

It belongs to the complex I subunit 3 family. In terms of assembly, core subunit of respiratory chain NADH dehydrogenase (Complex I) which is composed of 45 different subunits. Interacts with TMEM186. Interacts with TMEM242.

It localises to the mitochondrion inner membrane. It carries out the reaction a ubiquinone + NADH + 5 H(+)(in) = a ubiquinol + NAD(+) + 4 H(+)(out). In terms of biological role, core subunit of the mitochondrial membrane respiratory chain NADH dehydrogenase (Complex I) which catalyzes electron transfer from NADH through the respiratory chain, using ubiquinone as an electron acceptor. Essential for the catalytic activity of complex I. This chain is NADH-ubiquinone oxidoreductase chain 3, found in Rattus norvegicus (Rat).